A 426-amino-acid chain; its full sequence is Riboflavin biosynthesis protein PYRD, chloroplastic (426 aa).

Residues 1-61 constitute a chloroplast transit peptide; the sequence is MQISCLPISI…SQTGFSNPVL (61 aa). The CMP/dCMP-type deaminase domain maps to 72–194; that stretch reads VDDSFYMRKC…RLKDAGIDVT (123 aa). Histidine 121 contacts Zn(2+). Glutamate 123 (proton donor) is an active-site residue. Residues cysteine 146 and cysteine 155 each contribute to the Zn(2+) site.

Zn(2+) is required as a cofactor.

The protein localises to the plastid. The protein resides in the chloroplast. The catalysed reaction is 2,5-diamino-6-hydroxy-4-(5-phosphoribosylamino)-pyrimidine + H2O + H(+) = 5-amino-6-(5-phospho-D-ribosylamino)uracil + NH4(+). It functions in the pathway cofactor biosynthesis; riboflavin biosynthesis; 5-amino-6-(D-ribitylamino)uracil from GTP: step 2/4. Monofunctional pyrimidine deaminase involved in the riboflavin biosynthesis pathway. Also has a reductase domain that lacks catalytically essential substrate-binding residues. The chain is Riboflavin biosynthesis protein PYRD, chloroplastic (PYRD) from Arabidopsis thaliana (Mouse-ear cress).